Reading from the N-terminus, the 357-residue chain is Putative F-box/kelch-repeat protein At5g38680 (357 aa).

Positions 14–61 constitute an F-box domain; sequence NSNPSLPDALIISCIARVSRLYYPILSFVSKSFRSLLASPELYKERSL. Kelch repeat units lie at residues 131–175, 177–224, 226–267, and 268–313; these read NIYN…VLDG, IYVA…SKSL, IDEK…YCEI, and ENVL…GGKK.

This is Putative F-box/kelch-repeat protein At5g38680 from Arabidopsis thaliana (Mouse-ear cress).